Reading from the N-terminus, the 430-residue chain is ATP-dependent RNA helicase RhlB (430 aa).

The Q motif signature appears at 9–37 (QKFSDFALHPQVIEALESKGFHNCTPIQA). Residues 40–219 (LPLALSGRDV…FEQMNNAEYV (180 aa)) enclose the Helicase ATP-binding domain. 53–60 (AQTGTGKT) lines the ATP pocket. The DEAD box motif lies at 165–168 (DEAD). One can recognise a Helicase C-terminal domain in the interval 245 to 390 (RLLQTLLEEE…VSKYNSDALM (146 aa)). The interval 392–430 (DLPAPKRLTRPPRSNNGPRRHNNAPRRSGAPRNNRKRAD) is disordered.

Belongs to the DEAD box helicase family. RhlB subfamily. Component of the RNA degradosome, which is a multiprotein complex involved in RNA processing and mRNA degradation.

It localises to the cytoplasm. The enzyme catalyses ATP + H2O = ADP + phosphate + H(+). DEAD-box RNA helicase involved in RNA degradation. Has RNA-dependent ATPase activity and unwinds double-stranded RNA. In Pectobacterium carotovorum subsp. carotovorum (strain PC1), this protein is ATP-dependent RNA helicase RhlB.